A 2462-amino-acid polypeptide reads, in one-letter code: Non-reducing polyketide synthase ausA (2462 aa).

An N-terminal acylcarrier protein transacylase domain (SAT) region spans residues 16–253 (VFFGPVYPEL…HTADHIPAMK (238 aa)). Positions 385-801 (SAPIAVTGFA…GSNAVIVVKE (417 aa)) constitute a Ketosynthase family 3 (KS3) domain. Active-site for beta-ketoacyl synthase activity residues include Cys-550, His-685, and His-724. Positions 904–1208 (LCFGGQTGDT…LPIDLQESTA (305 aa)) are malonyl-CoA:ACP transacylase (MAT) domain. The active-site For acyl/malonyl transferase activity is Ser-991. An N-terminal hotdog fold region spans residues 1274 to 1403 (HDDGLLQLVE…GKVLLDPQAA (130 aa)). A PKS/mFAS DH domain is found at 1274 to 1581 (HDDGLLQLVE…FTSVSIQSLK (308 aa)). The product template (PT) domain stretch occupies residues 1277-1580 (GLLQLVERDA…TFTSVSIQSL (304 aa)). Residue His-1307 is the Proton acceptor; for dehydratase activity of the active site. A C-terminal hotdog fold region spans residues 1431 to 1581 (SSNGLKRATV…FTSVSIQSLK (151 aa)). Catalysis depends on Asp-1489, which acts as the Proton donor; for dehydratase activity. Residues 1613 to 1690 (VSDDHHLRAV…GLAHRISPSS (78 aa)) form the Carrier domain. Ser-1650 bears the O-(pantetheine 4'-phosphoryl)serine mark. The segment at 1850 to 2083 (QHASEHKLLR…GFNWVDWTDN (234 aa)) is methyltransferase (CMeT) domain. The segment at 2112–2462 (TPARVETVRY…YEFLRQHVAV (351 aa)) is thioesterase (TE) domain. Residues Ser-2235, Asp-2398, and His-2430 each act as for thioesterase activity in the active site.

The catalysed reaction is 3 malonyl-CoA + acetyl-CoA + 2 S-adenosyl-L-methionine = 3,5-dimethylorsellinate + 2 S-adenosyl-L-homocysteine + 3 CO2 + 4 CoA. It functions in the pathway secondary metabolite biosynthesis; terpenoid biosynthesis. Functionally, non-reducing polyketide synthase; part of the gene cluster that mediates the biosynthesis of calidodehydroaustin, a fungal meroterpenoid. The first step of the pathway is the synthesis of 3,5-dimethylorsellinic acid by the polyketide synthase ausA. 3,5-dimethylorsellinic acid is then prenylated by the polyprenyl transferase ausN. Further epoxidation by the FAD-dependent monooxygenase ausM and cyclization by the probable terpene cyclase ausL lead to the formation of protoaustinoid A. Protoaustinoid A is then oxidized to spiro-lactone preaustinoid A3 by the combined action of the FAD-binding monooxygenases ausB and ausC, and the dioxygenase ausE. Acid-catalyzed keto-rearrangement and ring contraction of the tetraketide portion of preaustinoid A3 by ausJ lead to the formation of preaustinoid A4. The aldo-keto reductase ausK, with the help of ausH, is involved in the next step by transforming preaustinoid A4 into isoaustinone which is in turn hydroxylated by the P450 monooxygenase ausI to form austinolide. The cytochrome P450 monooxygenase ausG modifies austinolide to austinol. Austinol is further acetylated to austin by the O-acetyltransferase ausP, which spontaneously changes to dehydroaustin. The cytochrome P450 monooxygenase ausR then converts dehydroaustin is into 7-dehydrodehydroaustin. The hydroxylation catalyzed by ausR permits the O-acetyltransferase ausQ to add an additional acetyl group to the molecule, leading to the formation of acetoxydehydroaustin. The short chain dehydrogenase ausT catalyzes the reduction of the double bond present between carbon atoms 1 and 2 to convert 7-dehydrodehydroaustin into 1,2-dihydro-7-hydroxydehydroaustin. AusQ catalyzes not only an acetylation reaction but also the addition of the PKS ausV diketide product to 1,2-dihydro-7-hydroxydehydroaustin, forming precalidodehydroaustin. Finally, the iron/alpha-ketoglutarate-dependent dioxygenase converts precalidodehydroaustin into calidodehydroaustin. The polypeptide is Non-reducing polyketide synthase ausA (Aspergillus calidoustus).